The chain runs to 333 residues: MDERLLSGESAYEDADLEYSLRPQTLRQYIGQDKAKHNLEVFIEAAKMREETLDHVLLYGPPGLGKTTLANIIANEMGVNIRTTSGPAIERPGDLAAVLTALQPGDVLFIDEIHRLHRSIEEVLYPAMEDFCLDIVIGKGPTARSVRLDLPPFTLVGATTRAGALSAPLRDRFGVLSRLEYYTVDQLSAIVERTAEVFEVEIDSLAALEIARRARGTPRIANRLLRRVRDFAQVRGDGTIAMEITQMALELLQVDKLGLDHIDHKFLLGIIEKFRGGPVGLETVSATIGEESHTIEDVYEPYLLQIGFLQRTPRGRIVTPLAYQHFGMEMPKI.

The tract at residues 1 to 182 (MDERLLSGES…FGVLSRLEYY (182 aa)) is large ATPase domain (RuvB-L). ATP-binding positions include Leu21, Arg22, Gly63, Lys66, Thr67, Thr68, 129–131 (EDF), Arg172, Tyr182, and Arg219. Residue Thr67 coordinates Mg(2+). Residues 183 to 253 (TVDQLSAIVE…ITQMALELLQ (71 aa)) are small ATPAse domain (RuvB-S). Positions 256–333 (KLGLDHIDHK…QHFGMEMPKI (78 aa)) are head domain (RuvB-H). Residues Arg311 and Arg316 each coordinate DNA.

It belongs to the RuvB family. In terms of assembly, homohexamer. Forms an RuvA(8)-RuvB(12)-Holliday junction (HJ) complex. HJ DNA is sandwiched between 2 RuvA tetramers; dsDNA enters through RuvA and exits via RuvB. An RuvB hexamer assembles on each DNA strand where it exits the tetramer. Each RuvB hexamer is contacted by two RuvA subunits (via domain III) on 2 adjacent RuvB subunits; this complex drives branch migration. In the full resolvosome a probable DNA-RuvA(4)-RuvB(12)-RuvC(2) complex forms which resolves the HJ.

The protein localises to the cytoplasm. It carries out the reaction ATP + H2O = ADP + phosphate + H(+). Functionally, the RuvA-RuvB-RuvC complex processes Holliday junction (HJ) DNA during genetic recombination and DNA repair, while the RuvA-RuvB complex plays an important role in the rescue of blocked DNA replication forks via replication fork reversal (RFR). RuvA specifically binds to HJ cruciform DNA, conferring on it an open structure. The RuvB hexamer acts as an ATP-dependent pump, pulling dsDNA into and through the RuvAB complex. RuvB forms 2 homohexamers on either side of HJ DNA bound by 1 or 2 RuvA tetramers; 4 subunits per hexamer contact DNA at a time. Coordinated motions by a converter formed by DNA-disengaged RuvB subunits stimulates ATP hydrolysis and nucleotide exchange. Immobilization of the converter enables RuvB to convert the ATP-contained energy into a lever motion, pulling 2 nucleotides of DNA out of the RuvA tetramer per ATP hydrolyzed, thus driving DNA branch migration. The RuvB motors rotate together with the DNA substrate, which together with the progressing nucleotide cycle form the mechanistic basis for DNA recombination by continuous HJ branch migration. Branch migration allows RuvC to scan DNA until it finds its consensus sequence, where it cleaves and resolves cruciform DNA. This is Holliday junction branch migration complex subunit RuvB from Bacillus cytotoxicus (strain DSM 22905 / CIP 110041 / 391-98 / NVH 391-98).